Reading from the N-terminus, the 372-residue chain is NAD(P)H-quinone oxidoreductase subunit 1 (372 aa).

8 helical membrane-spanning segments follow: residues 28–48 (IWLP…VLVV), 97–117 (WLFT…YLIV), 130–150 (VGIF…LMSG), 176–196 (LALA…IDIV), 204–224 (ILGW…IAAL), 265–285 (LVLS…FPIP), 308–328 (SLGI…AVLL), and 351–371 (VALV…IAFG).

The protein belongs to the complex I subunit 1 family. NDH-1 is composed of at least 11 different subunits.

It is found in the cellular thylakoid membrane. It catalyses the reaction a plastoquinone + NADH + (n+1) H(+)(in) = a plastoquinol + NAD(+) + n H(+)(out). The catalysed reaction is a plastoquinone + NADPH + (n+1) H(+)(in) = a plastoquinol + NADP(+) + n H(+)(out). Its function is as follows. NDH-1 shuttles electrons from an unknown electron donor, via FMN and iron-sulfur (Fe-S) centers, to quinones in the respiratory and/or the photosynthetic chain. The immediate electron acceptor for the enzyme in this species is believed to be plastoquinone. Couples the redox reaction to proton translocation, and thus conserves the redox energy in a proton gradient. In Picosynechococcus sp. (strain ATCC 27264 / PCC 7002 / PR-6) (Agmenellum quadruplicatum), this protein is NAD(P)H-quinone oxidoreductase subunit 1.